Here is a 249-residue protein sequence, read N- to C-terminus: Zinc finger protein mnm-2 (249 aa).

The tract at residues 20 to 65 (PKEELETEEEDEEEDEEEELSSSEVTSENDMETESASSSASSVGQP) is disordered. The segment covering 24–52 (LETEEEDEEEDEEEELSSSEVTSENDMET) has biased composition (acidic residues). 3 consecutive C2H2-type zinc fingers follow at residues 168-190 (YRCDVCDKTFSRSNTLITHKRIH), 196-218 (FKCEHCGRAFRQPGNLTRHRLTH), and 224-246 (YVCGLCDKAFNRASNLHTHMRTH).

In terms of tissue distribution, in larva and adult, expressed in the M3 pharyngeal motor neurons, extrapharyngeal neurons in the head, the PQR tail neurons, rectal cells, vulva cells, the spermetheca-uterine valve, body wall muscle cells and neurons of the ventral nerve cord. In the embryo, expressed in pharyngeal cells, extrapharyngeal head neurons and within the tail. Expressed in body wall muscle cells during late embryonic stages. Expressed in the mother cells of the M2 and M3 pharyngeal motor neurons precursor cells at the embryonic bean stage and subsequently in the M2 and M3 cells as they are born. Expression is sustained only in the two M3 cells up to at least the 5-day-old adult. In contrast, expression gradually declines in the M2 cells beginning from the time of their birth, and is completely undetectable by the time of hatching.

It is found in the nucleus. Functionally, required in the M3 pharyngeal motor neuron to guide the growth cone of the sister M2 motor neuron during axon development. The polypeptide is Zinc finger protein mnm-2 (Caenorhabditis elegans).